Reading from the N-terminus, the 476-residue chain is NADH-quinone oxidoreductase subunit N (476 aa).

Helical transmembrane passes span 4-24 (LLAL…MLTI), 32-52 (LTAT…VVAW), 67-87 (GLAV…ATLG), 100-117 (EYYL…ALVS), 121-141 (LAAL…MLAY), 155-175 (YMVL…LLYS), 198-218 (LMAG…IVPF), 230-250 (PAPA…LVLL), 263-283 (LHSL…LLAL), 291-311 (LLGY…VVND), 319-339 (ALYL…VTLL), 366-386 (AVLT…GFIG), 406-426 (VVAG…TLFL), and 447-467 (VVVL…APMI).

It belongs to the complex I subunit 2 family. NDH-1 is composed of 14 different subunits. Subunits NuoA, H, J, K, L, M, N constitute the membrane sector of the complex.

The protein localises to the cell inner membrane. The catalysed reaction is a quinone + NADH + 5 H(+)(in) = a quinol + NAD(+) + 4 H(+)(out). Its function is as follows. NDH-1 shuttles electrons from NADH, via FMN and iron-sulfur (Fe-S) centers, to quinones in the respiratory chain. The immediate electron acceptor for the enzyme in this species is believed to be ubiquinone. Couples the redox reaction to proton translocation (for every two electrons transferred, four hydrogen ions are translocated across the cytoplasmic membrane), and thus conserves the redox energy in a proton gradient. This is NADH-quinone oxidoreductase subunit N from Chromohalobacter salexigens (strain ATCC BAA-138 / DSM 3043 / CIP 106854 / NCIMB 13768 / 1H11).